The sequence spans 450 residues: tRNA modification GTPase MnmE (450 aa).

(6S)-5-formyl-5,6,7,8-tetrahydrofolate is bound by residues Arg23, Glu79, and Lys118. The region spanning Gly214–Gly374 is the TrmE-type G domain. Residue Asn224 coordinates K(+). GTP contacts are provided by residues Asn224–Ser229, Thr243–Thr249, and Asp268–Gly271. Ser228 contributes to the Mg(2+) binding site. Residues Thr243, Ile245, and Thr248 each coordinate K(+). Thr249 contacts Mg(2+). Lys450 contacts (6S)-5-formyl-5,6,7,8-tetrahydrofolate.

The protein belongs to the TRAFAC class TrmE-Era-EngA-EngB-Septin-like GTPase superfamily. TrmE GTPase family. Homodimer. Heterotetramer of two MnmE and two MnmG subunits. Requires K(+) as cofactor.

It is found in the cytoplasm. Exhibits a very high intrinsic GTPase hydrolysis rate. Involved in the addition of a carboxymethylaminomethyl (cmnm) group at the wobble position (U34) of certain tRNAs, forming tRNA-cmnm(5)s(2)U34. This chain is tRNA modification GTPase MnmE, found in Francisella tularensis subsp. novicida (strain U112).